Here is a 458-residue protein sequence, read N- to C-terminus: D-inositol 3-phosphate glycosyltransferase (458 aa).

A 1D-myo-inositol 3-phosphate-binding site is contributed by His-16. UDP-N-acetyl-alpha-D-glucosamine is bound by residues 22–23 (QP) and Gly-30. Residues 27 to 32 (DAGGMN), Lys-85, Tyr-118, Thr-142, and Arg-162 contribute to the 1D-myo-inositol 3-phosphate site. Residues Arg-236, Lys-241, and Gln-302 each contribute to the UDP-N-acetyl-alpha-D-glucosamine site. Mg(2+) contacts are provided by Tyr-311, Arg-312, and Ser-314. Glu-324 and Glu-332 together coordinate UDP-N-acetyl-alpha-D-glucosamine. Thr-338 provides a ligand contact to Mg(2+). The disordered stretch occupies residues 428–458 (VAAQNVTGSSSRTRRPWRRRRSTLLPMTGRS). Residues 439–449 (RTRRPWRRRRS) show a composition bias toward basic residues.

The protein belongs to the glycosyltransferase group 1 family. MshA subfamily. In terms of assembly, homodimer.

The enzyme catalyses 1D-myo-inositol 3-phosphate + UDP-N-acetyl-alpha-D-glucosamine = 1D-myo-inositol 2-acetamido-2-deoxy-alpha-D-glucopyranoside 3-phosphate + UDP + H(+). Catalyzes the transfer of a N-acetyl-glucosamine moiety to 1D-myo-inositol 3-phosphate to produce 1D-myo-inositol 2-acetamido-2-deoxy-glucopyranoside 3-phosphate in the mycothiol biosynthesis pathway. The protein is D-inositol 3-phosphate glycosyltransferase of Gordonia bronchialis (strain ATCC 25592 / DSM 43247 / BCRC 13721 / JCM 3198 / KCTC 3076 / NBRC 16047 / NCTC 10667) (Rhodococcus bronchialis).